A 424-amino-acid chain; its full sequence is SWI/SNF and RSC complexes subunit arp42 (424 aa).

The protein belongs to the actin family. In terms of assembly, component of the RSC complex composed of at least arp9, arp42, rsc1, rsc4, rsc7, rsc9, rsc58, sfh1, snf21, ssr1, ssr2, ssr3 and ssr4. The complex interacts with histone and histone variant components of centromeric chromatin. Component of the SWI/SNF global transcription activator complex composed of at least arp9, arp42, snf5, snf22, snf30, sbf59, sol1, ssr1, ssr2, ssr3, ssr4 and tfg3.

The protein localises to the cytoplasm. The protein resides in the nucleus. Component of the chromatin structure remodeling complex (RSC), which is involved in transcription regulation and nucleosome positioning. Controls particularly membrane and organelle development genes. Part of the SWI/SNF complex, an ATP-dependent chromatin remodeling complex, required for the positive and negative regulation of gene expression of a large number of genes. It changes chromatin structure by altering DNA-histone contacts within a nucleosome, leading eventually to a change in nucleosome position, thus facilitating or repressing binding of gene-specific transcription factors. The chain is SWI/SNF and RSC complexes subunit arp42 (arp42) from Schizosaccharomyces pombe (strain 972 / ATCC 24843) (Fission yeast).